A 641-amino-acid chain; its full sequence is ATP-dependent DNA helicase PIF1 (641 aa).

Residues 1 to 180 (MLSGIEAAAG…LVKRPVEPQA (180 aa)) form a PINT region. Phosphoserine occurs at positions 27 and 151. Residues 167 to 641 (PDTTLVKRPV…SDQENMDPIL (475 aa)) are hydrolyzes ATP in the presence of both magnesium and single-stranded DNA; weak activity in the presence of RNA or double-stranded DNA; No unwinding activity. Positions 173 to 192 (KRPVEPQAGAEPSTEAPRWP) are disordered. Position 228-235 (228-235 (GSAGTGKS)) interacts with ATP. A DNA-binding region spans residues 577–596 (QAYVALSRARSLQGLRVLDF). The tract at residues 622–641 (LESPDDDEAASDQENMDPIL) is disordered. The segment covering 624–641 (SPDDDEAASDQENMDPIL) has biased composition (acidic residues).

This sequence belongs to the helicase family. PIF1 subfamily. In terms of assembly, monomer. Interacts with telomerase. It depends on Mg(2+) as a cofactor. As to expression, weak ubiquitous expression.

The protein localises to the nucleus. Its subcellular location is the mitochondrion. It catalyses the reaction Couples ATP hydrolysis with the unwinding of duplex DNA at the replication fork by translocating in the 5'-3' direction. This creates two antiparallel DNA single strands (ssDNA). The leading ssDNA polymer is the template for DNA polymerase III holoenzyme which synthesizes a continuous strand.. It carries out the reaction ATP + H2O = ADP + phosphate + H(+). Functionally, DNA-dependent ATPase and 5'-3' DNA helicase required for the maintenance of both mitochondrial and nuclear genome stability. Efficiently unwinds G-quadruplex (G4) DNA structures and forked RNA-DNA hybrids. Resolves G4 structures, preventing replication pausing and double-strand breaks (DSBs) at G4 motifs. Involved in the maintenance of telomeric DNA. Inhibits telomere elongation, de novo telomere formation and telomere addition to DSBs via catalytic inhibition of telomerase. Reduces the processivity of telomerase by displacing active telomerase from DNA ends. Releases telomerase by unwinding the short telomerase RNA/telomeric DNA hybrid that is the intermediate in the telomerase reaction. Possesses an intrinsic strand annealing activity. The chain is ATP-dependent DNA helicase PIF1 from Homo sapiens (Human).